We begin with the raw amino-acid sequence, 590 residues long: MRAQDLPPLPETPGVYLWKRGEEVLYVGKAKSLRARVKSYFHAEGKARRIAEEATGLDFIATRDEVEALLLEANLIKAHRPLYNVLLKDDKHYPFLKLTNEPFPTLLVVRRVEEDGAKYYGPFPEAGALRRIKTLIDRLFPLRKNSGYPMKRRRYPCLNYSMGRCLAPCVGKADPEAYQEVVRQVEAVLEGRVDGLLQELEAKMREAARRLEFERAAEIRDQMEALRAFFSTDQQAFDPEMGDLDFLGMARSGALAVVQLYQVRSGRILGRISRVVEKEEATDEEILWAFLRDHYLEASPLPPLVLLPFPLEDLESLAELLKRRAGRKVELRVPKKGEKARLLELAERNARLALETELKLRERRGEHPALKALQDLLGLPARPWRLEGYDISHLQGQARVFSIAVFEGGRPKRQEYRRMRLKAGNDDYAAMEEGVFRRYTGSLKDLPLPDLLLIDGGVGQVRAAARALERAGLRLPLVGLAKGEEVLVTPEGRELRLPLTHPALQLLIHLRDEAHQNGLRYHRKRRSEELFRVLQGIPGIGEKRRRLLLERYGGLRALKEAPLEELARLPGMSLEAARALKAALAEEEPA.

Positions 11–85 (ETPGVYLWKR…IKAHRPLYNV (75 aa)) constitute a GIY-YIG domain. The 36-residue stretch at 194–229 (DGLLQELEAKMREAARRLEFERAAEIRDQMEALRAF) folds into the UVR domain.

The protein belongs to the UvrC family. Interacts with UvrB in an incision complex.

It is found in the cytoplasm. In terms of biological role, the UvrABC repair system catalyzes the recognition and processing of DNA lesions. UvrC both incises the 5' and 3' sides of the lesion. The N-terminal half is responsible for the 3' incision and the C-terminal half is responsible for the 5' incision. The protein is UvrABC system protein C of Thermus thermophilus (strain ATCC 27634 / DSM 579 / HB8).